Here is a 940-residue protein sequence, read N- to C-terminus: MPRRLRPTRLEHVVDGHALRARLSAAALDSIGNEAEQRARAIDILKQALFRGRMIAKERLENGASGVETSRLLSGVTDEVITALYDFTTVHVFRARNPTEGERLCLLAVGGYGRGTLAPFSDIDLLFLRPYKQTPHAESVIEYMLYALWDLGFKVGHASRTIEECVRLSKEDFTIRTSILEARRLTGDERLAEDLKKRFRDEVMKATGAQFVAAKLKERDDRQARAGASRYMVEPNVKEGKGGLRDLHTLMWIAEYLHPVDRPEDVFKMEVFSIRETKAFIRAFDFLHAVRAHLHFTTGRPEERLTFDLQPEIARRMGYGDRGDAPAVERFMRRYFLIAKEVGTLTRAFSAKLEAEHFKNEPKGISRFLPGARPKRKALDVEGFYEDGGRLNIEGQEIFEADPVNLIRLFKIADERDLDLHPDAFTAVTRALPLITSRVRRDPDACRAFLDLLARGKRSYRTLTLMNDAGVLGRFIPEFGRVVAQMQFNMYHSYTVDEHTLRAVGVIGDIAAGRLVDDHPLAVSIMPLIEDREALFLAMLLHDTGKGGVGGQEKAGARSARSACERLGVERSKVELVAWLVENHLVMSDFAQKRDVSDPGTVAAFARIVENPERLRLLLVITVADIRAVGPGVWNGWKGQLLRELYNATEAVFRGGRGSDAAANVQRHQESTAEAARAALLETDPAAKGWVAAMENAYFSAFSQDDLFHHAELARRAAIQGGAAAEGQVRPGSNAAEVVIAAKDRRGLFADLALAISSLGGNVVGARVFTSRQGQALDVFYVQDVTGAPFGCENPRALRRLADALEAAGKGDALAVEPRRGSEQTRAAAFAIAPSVTIDNDASNDATVVEASGRDRPGLLHALAKTLADSALSIQSAHIDGYGERAVDAFYVQTTEGGKVTDTRKLNALKADLLAALEQNEASAPAARPGLRRARASVAR.

A uridylyltransferase region spans residues 1-379; sequence MPRRLRPTRL…PGARPKRKAL (379 aa). Residues 380–736 are uridylyl-removing; it reads DVEGFYEDGG…GQVRPGSNAA (357 aa). One can recognise an HD domain in the interval 496-618; it reads VDEHTLRAVG…VENPERLRLL (123 aa). 2 consecutive ACT domains span residues 737-821 and 848-929; these read EVVI…PRRG and VVEA…AARP.

Belongs to the GlnD family. Requires Mg(2+) as cofactor.

It catalyses the reaction [protein-PII]-L-tyrosine + UTP = [protein-PII]-uridylyl-L-tyrosine + diphosphate. The catalysed reaction is [protein-PII]-uridylyl-L-tyrosine + H2O = [protein-PII]-L-tyrosine + UMP + H(+). With respect to regulation, uridylyltransferase (UTase) activity is inhibited by glutamine, while glutamine activates uridylyl-removing (UR) activity. Its function is as follows. Modifies, by uridylylation and deuridylylation, the PII regulatory proteins (GlnB and homologs), in response to the nitrogen status of the cell that GlnD senses through the glutamine level. Under low glutamine levels, catalyzes the conversion of the PII proteins and UTP to PII-UMP and PPi, while under higher glutamine levels, GlnD hydrolyzes PII-UMP to PII and UMP (deuridylylation). Thus, controls uridylylation state and activity of the PII proteins, and plays an important role in the regulation of nitrogen assimilation and metabolism. In Caulobacter vibrioides (strain ATCC 19089 / CIP 103742 / CB 15) (Caulobacter crescentus), this protein is Bifunctional uridylyltransferase/uridylyl-removing enzyme.